Here is a 355-residue protein sequence, read N- to C-terminus: Elongation factor Ts (355 aa).

An involved in Mg(2+) ion dislocation from EF-Tu region spans residues Thr-82–Val-85.

Belongs to the EF-Ts family.

The protein localises to the cytoplasm. Functionally, associates with the EF-Tu.GDP complex and induces the exchange of GDP to GTP. It remains bound to the aminoacyl-tRNA.EF-Tu.GTP complex up to the GTP hydrolysis stage on the ribosome. This is Elongation factor Ts from Helicobacter pylori (strain HPAG1).